A 269-amino-acid chain; its full sequence is Putative pyruvate, phosphate dikinase regulatory protein (269 aa).

ADP is bound at residue 147-154; it reads GLSRTSKT.

The protein belongs to the pyruvate, phosphate/water dikinase regulatory protein family. PDRP subfamily.

It catalyses the reaction N(tele)-phospho-L-histidyl/L-threonyl-[pyruvate, phosphate dikinase] + ADP = N(tele)-phospho-L-histidyl/O-phospho-L-threonyl-[pyruvate, phosphate dikinase] + AMP + H(+). The catalysed reaction is N(tele)-phospho-L-histidyl/O-phospho-L-threonyl-[pyruvate, phosphate dikinase] + phosphate + H(+) = N(tele)-phospho-L-histidyl/L-threonyl-[pyruvate, phosphate dikinase] + diphosphate. Functionally, bifunctional serine/threonine kinase and phosphorylase involved in the regulation of the pyruvate, phosphate dikinase (PPDK) by catalyzing its phosphorylation/dephosphorylation. The sequence is that of Putative pyruvate, phosphate dikinase regulatory protein from Clostridium botulinum (strain 657 / Type Ba4).